Reading from the N-terminus, the 161-residue chain is MIVRLHAIYQDITRDYLPPASLNHLMLLSKQTQHKLSFKSAPIPDLQPFFKNFTSKTPGSAKESPCSSTAKISSSISISSQCIFNVVILSFVFTSQNLNLPSHPALHNVSPESLNDRLMTQLECANSPRLACELWVGTDKEPILSPNSVSYRVMQPNEFES.

Residues 76–94 (ISISSQCIFNVVILSFVFT) traverse the membrane as a helical segment.

The protein localises to the membrane. This is an uncharacterized protein from Saccharomyces cerevisiae (strain ATCC 204508 / S288c) (Baker's yeast).